A 402-amino-acid polypeptide reads, in one-letter code: APO protein 3, mitochondrial (402 aa).

Residues Met1–Val13 constitute a mitochondrion transit peptide. Residues Asn37–Tyr59 form a disordered region. Basic and acidic residues predominate over residues Lys48–Pro58. APO domains lie at Arg127–Lys213 and Thr294–Asp380.

The protein belongs to the APO family.

The protein localises to the mitochondrion. Its function is as follows. May be involved in the stable assembly of several 4Fe-4S cluster-containing complexes of mitochondria. The chain is APO protein 3, mitochondrial (APO3) from Arabidopsis thaliana (Mouse-ear cress).